Consider the following 109-residue polypeptide: Phosphoribosyl-AMP cyclohydrolase (109 aa).

Mg(2+) is bound at residue aspartate 80. Residue cysteine 81 coordinates Zn(2+). Residues aspartate 82 and aspartate 84 each coordinate Mg(2+). Zn(2+) is bound by residues cysteine 97 and cysteine 104.

The protein belongs to the PRA-CH family. As to quaternary structure, homodimer. Requires Mg(2+) as cofactor. Zn(2+) is required as a cofactor.

The protein resides in the cytoplasm. The catalysed reaction is 1-(5-phospho-beta-D-ribosyl)-5'-AMP + H2O = 1-(5-phospho-beta-D-ribosyl)-5-[(5-phospho-beta-D-ribosylamino)methylideneamino]imidazole-4-carboxamide. The protein operates within amino-acid biosynthesis; L-histidine biosynthesis; L-histidine from 5-phospho-alpha-D-ribose 1-diphosphate: step 3/9. Its function is as follows. Catalyzes the hydrolysis of the adenine ring of phosphoribosyl-AMP. The chain is Phosphoribosyl-AMP cyclohydrolase from Clostridium botulinum (strain Alaska E43 / Type E3).